A 344-amino-acid chain; its full sequence is Trace amine-associated receptor 8b (344 aa).

The Extracellular portion of the chain corresponds to 1 to 33; that stretch reads MTSNFSQATLQLCYENVNASCIKTPYSPGLRVL. N-linked (GlcNAc...) asparagine glycosylation is found at Asn4 and Asn18. Cystine bridges form between Cys21/Cys185 and Cys104/Cys189. The helical transmembrane segment at 34 to 54 threads the bilayer; that stretch reads LYMVFGFGAVLAVCGNLLVVI. At 55–67 the chain is on the cytoplasmic side; sequence SVLHFKQLHSPAN. A helical membrane pass occupies residues 68–88; it reads FLIASLASADFLVGISVMPFS. Residues 89–102 lie on the Extracellular side of the membrane; sequence MVRSIESCWYFGDT. The chain crosses the membrane as a helical span at residues 103–127; the sequence is FCSLHSCCDAAFCYSSLFHLCFISV. The Cytoplasmic segment spans residues 128–146; sequence DRYIAVTEPLVYPTKFTMS. A helical transmembrane segment spans residues 147 to 167; sequence VSGICISISWILPLVYSSAVF. Residues 168-196 lie on the Extracellular side of the membrane; that stretch reads YTGISATGIENLVSALNCVGGCQVAINQD. The helical transmembrane segment at 197–217 threads the bilayer; it reads WVLISFLLFFIPTLVMIILYS. Over 218–256 the chain is Cytoplasmic; it reads KIFLVAKQQAVKIETSISGSKGESSLESHKARVAKRERK. The helical transmembrane segment at 257–277 threads the bilayer; that stretch reads AAKTLGVTVMAFMVSWLPYTI. The Extracellular portion of the chain corresponds to 278 to 295; sequence DTLIDAFMGFITPAYVYE. The helical transmembrane segment at 296–319 threads the bilayer; that stretch reads ICGWIAYYNSAMNPLIYAFFYPWF. Topologically, residues 320 to 344 are cytoplasmic; sequence RKAIKLILSGKILKGHSSTTSLFSE.

This sequence belongs to the G-protein coupled receptor 1 family.

It localises to the cell membrane. Olfactory receptor activated by trace amines. Trace amine compounds are enriched in animal body fluids and act on trace amine-associated receptors (TAARs) to elicit both intraspecific and interspecific innate behaviors. Ligand-binding causes a conformation change that triggers signaling via G(s)-class of G alpha proteins (GNAL or GNAS). The protein is Trace amine-associated receptor 8b of Rattus norvegicus (Rat).